The primary structure comprises 305 residues: Oxidoreductase swnR (305 aa).

The protein belongs to the NmrA-type oxidoreductase family. Isoflavone reductase subfamily.

The enzyme catalyses L-pipecolate + O2 = L-1-piperideine-6-carboxylate + H2O2 + H(+). Its pathway is mycotoxin biosynthesis. Oxidoreductase; part of the gene cluster that mediates the biosynthesis of swainsonine (SW), a cytotoxic fungal alkaloid and a potential cancer therapy drug. Swainsonine production occurs via a multibranched pathway and is dispensable for fungal colonization of plants and infection of insect hosts. The first step of swainsonine biosynthesis is the production of the precursor pipecolic acid (PA) via conversion of L-lysine (Lys) to 1-piperideine-6-carboxylate (P6C) by the aminotransferase swnA, the latter being further reduced to PA by the reductase swnR. PA can be converted from lysine by both the SW biosynthetic cluster and the unclustered genes such as lysine cyclodeaminase. The PKS-NRPS hybrid synthetase swnK uptakes and condensates PA and malonyl-CoA with and without skipping of the ketoreductase (KR) domain in order to produce 3 intermediates, 1-oxoindolizidine, (1S)-1-hydroxyindolizin, and (1R)-1-hydroxyindolizine; with the transisomer (1S)-1-hydroxyindolizin being predominant. The terminal thioester reductase (TE) domain of swnK is involved in reduction of the thioester bond to release the intermediate aldehydes. The oxidoreductase swnN could contribute to the reduction of 1-oxoindolizidine to (1S)-1-hydroxyindolizin and (1R)-1-hydroxyindolizine, contributing to the major route of SW production. The dioxygenase swnH2 would be responsible for the oxidization of (1R)-1-hydroxyindolizine into (1R,2S)-1,2-dihydroxyindolizine and of (1S)-1-hydroxyindolizin to yield both (1R,2S)-1,2-dihydroxyindolizine and (1S,2S)-1,2-dihydroxyindolizine. The dioxygenase swnH1 then performs the conversion of the 1,2-dihydroxyindolizine epimers to SW. This is Oxidoreductase swnR from Metarhizium robertsii (strain ARSEF 23 / ATCC MYA-3075) (Metarhizium anisopliae (strain ARSEF 23)).